We begin with the raw amino-acid sequence, 92 residues long: Small ribosomal subunit protein bS20 (92 aa).

Belongs to the bacterial ribosomal protein bS20 family.

Its function is as follows. Binds directly to 16S ribosomal RNA. This is Small ribosomal subunit protein bS20 from Persephonella marina (strain DSM 14350 / EX-H1).